The primary structure comprises 338 residues: Probable tRNA pseudouridine synthase B (338 aa).

D78 functions as the Nucleophile in the catalytic mechanism. One can recognise a PUA domain in the interval 245-320 (LPKIILRDSA…LAATSVRIMM (76 aa)).

Belongs to the pseudouridine synthase TruB family. Type 2 subfamily.

The catalysed reaction is uridine(55) in tRNA = pseudouridine(55) in tRNA. Functionally, could be responsible for synthesis of pseudouridine from uracil-55 in the psi GC loop of transfer RNAs. This chain is Probable tRNA pseudouridine synthase B, found in Methanosarcina barkeri (strain Fusaro / DSM 804).